The following is a 348-amino-acid chain: Putative serine/threonine-protein phosphatase C26H8.05c (348 aa).

Aspartate 53, histidine 55, aspartate 81, and asparagine 113 together coordinate Mn(2+). Residue histidine 114 is the Proton donor of the active site. Residues histidine 163 and histidine 237 each coordinate Mn(2+). Residues 259 to 282 (TNEEDSELDSDSASPVDDSPAPGD) are disordered. Positions 269–280 (DSASPVDDSPAP) are enriched in low complexity. Serine 272 carries the post-translational modification Phosphoserine. Leucine 348 bears the Leucine methyl ester mark.

The protein belongs to the PPP phosphatase family. PP-1 subfamily. It depends on Mn(2+) as a cofactor.

The protein resides in the cytoplasm. The protein localises to the nucleus. It catalyses the reaction O-phospho-L-seryl-[protein] + H2O = L-seryl-[protein] + phosphate. It carries out the reaction O-phospho-L-threonyl-[protein] + H2O = L-threonyl-[protein] + phosphate. This chain is Putative serine/threonine-protein phosphatase C26H8.05c, found in Schizosaccharomyces pombe (strain 972 / ATCC 24843) (Fission yeast).